Reading from the N-terminus, the 331-residue chain is 6-phosphogluconolactonase (331 aa).

Residue K287 is modified to N6-acetyllysine.

It belongs to the cycloisomerase 2 family.

It catalyses the reaction 6-phospho-D-glucono-1,5-lactone + H2O = 6-phospho-D-gluconate + H(+). It functions in the pathway carbohydrate degradation; pentose phosphate pathway; D-ribulose 5-phosphate from D-glucose 6-phosphate (oxidative stage): step 2/3. In terms of biological role, catalyzes the hydrolysis of 6-phosphogluconolactone to 6-phosphogluconate. This Shigella boydii serotype 18 (strain CDC 3083-94 / BS512) protein is 6-phosphogluconolactonase.